A 618-amino-acid chain; its full sequence is Mitochondrial Rho GTPase 2 (618 aa).

Residues methionine 1–arginine 592 lie on the Cytoplasmic side of the membrane. Residues arginine 2 to histidine 168 form the Miro 1 domain. GTP-binding residues include glycine 16, lysine 17, threonine 18, and serine 19. Threonine 18 is a binding site for Mg(2+). 2 residues coordinate Mg(2+): proline 35 and aspartate 57. Serine 59 is a binding site for GTP. Lysine 96 is covalently cross-linked (Glycyl lysine isopeptide (Lys-Gly) (interchain with G-Cter in ubiquitin)). GTP-binding residues include asparagine 118, lysine 119, aspartate 121, alanine 149, and lysine 150. A Glycyl lysine isopeptide (Lys-Gly) (interchain with G-Cter in ubiquitin) cross-link involves residue lysine 119. A Glycyl lysine isopeptide (Lys-Gly) (interchain with G-Cter in ubiquitin) cross-link involves residue lysine 164. 2 EF-hand domains span residues alanine 184 to histidine 219 and leucine 304 to alanine 339. Residues aspartate 197, aspartate 199, aspartate 201, glutamate 208, aspartate 317, aspartate 319, aspartate 321, and glutamate 328 each contribute to the Ca(2+) site. Positions arginine 414 to phenylalanine 576 constitute a Miro 2 domain. GTP contacts are provided by glycine 426, glycine 428, lysine 429, serine 430, and alanine 431. Glycine 426, glycine 428, lysine 429, serine 430, and alanine 431 together coordinate GDP. Serine 430 lines the Mg(2+) pocket. Glutamate 471 is a binding site for Mg(2+). Residues lysine 525, aspartate 527, and cysteine 556 each coordinate GTP. Residues lysine 525, aspartate 527, and cysteine 556 each coordinate GDP. A helical; Anchor for type IV membrane protein transmembrane segment spans residues glycine 593–valine 615. Topologically, residues lysine 616–glutamine 618 are mitochondrial intermembrane.

It belongs to the mitochondrial Rho GTPase family. Homodimer. Interacts with the kinesin-binding proteins TRAK1/OIP106 and TRAK2/GRIF1, forming a link between mitochondria and the trafficking apparatus of the microtubules. Interacts with ARMCX3. Found in a complex with KIF5B, OGT, RHOT1 and TRAK1. Post-translationally, ubiquitinated by PRKN in a PINK1-dependent manner, leading to its degradation. In terms of tissue distribution, ubiquitously expressed. Highly expressed in heart, liver, skeletal muscle, kidney and pancreas.

Its subcellular location is the mitochondrion outer membrane. It carries out the reaction GTP + H2O = GDP + phosphate + H(+). The enzyme catalyses ATP + H2O = ADP + phosphate + H(+). It catalyses the reaction UTP + H2O = UDP + phosphate + H(+). In terms of biological role, atypical mitochondrial nucleoside-triphosphatase (NTPase) involved in mitochondrial trafficking. Probably involved in control of anterograde transport of mitochondria and their subcellular distribution. Can hydrolyze GTP. Can hydrolyze ATP and UTP. The polypeptide is Mitochondrial Rho GTPase 2 (RHOT2) (Homo sapiens (Human)).